The following is a 377-amino-acid chain: Tubulin--tyrosine ligase (377 aa).

One can recognise a TTL domain in the interval 3 to 370; it reads TFVVRDENSS…PPDTEQVPQQ (368 aa).

This sequence belongs to the tubulin--tyrosine ligase family. As to quaternary structure, monomer. It depends on Mg(2+) as a cofactor. K(+) serves as cofactor.

The enzyme catalyses C-terminal L-alpha-aminoacyl-L-glutamyl-L-glutamyl-[tubulin] + L-tyrosine + ATP = C-terminal L-alpha-aminoacyl-L-glutamyl-L-glutamyl-L-tyrosyl-[tubulin] + ADP + phosphate + H(+). Functionally, catalyzes the post-translational addition of a tyrosine to the C-terminal end of detyrosinated alpha-tubulin. The sequence is that of Tubulin--tyrosine ligase (Ttl) from Mus musculus (Mouse).